A 296-amino-acid polypeptide reads, in one-letter code: Formamidopyrimidine-DNA glycosylase (296 aa).

Residue Pro2 is the Schiff-base intermediate with DNA of the active site. Glu3 (proton donor) is an active-site residue. Catalysis depends on Lys58, which acts as the Proton donor; for beta-elimination activity. His106, Arg125, and Lys168 together coordinate DNA. The segment at 259–295 adopts an FPG-type zinc-finger fold; it reads RVYDRVGHACPTKGCTGRIGRIVQGGRSTFFCETCQV. The Proton donor; for delta-elimination activity role is filled by Arg285.

It belongs to the FPG family. As to quaternary structure, monomer. Zn(2+) is required as a cofactor.

It catalyses the reaction Hydrolysis of DNA containing ring-opened 7-methylguanine residues, releasing 2,6-diamino-4-hydroxy-5-(N-methyl)formamidopyrimidine.. The enzyme catalyses 2'-deoxyribonucleotide-(2'-deoxyribose 5'-phosphate)-2'-deoxyribonucleotide-DNA = a 3'-end 2'-deoxyribonucleotide-(2,3-dehydro-2,3-deoxyribose 5'-phosphate)-DNA + a 5'-end 5'-phospho-2'-deoxyribonucleoside-DNA + H(+). In terms of biological role, involved in base excision repair of DNA damaged by oxidation or by mutagenic agents. Acts as a DNA glycosylase that recognizes and removes damaged bases. Has a preference for oxidized purines, such as 7,8-dihydro-8-oxoguanine (8-oxoG). Has AP (apurinic/apyrimidinic) lyase activity and introduces nicks in the DNA strand. Cleaves the DNA backbone by beta-delta elimination to generate a single-strand break at the site of the removed base with both 3'- and 5'-phosphates. The sequence is that of Formamidopyrimidine-DNA glycosylase from Methylorubrum populi (strain ATCC BAA-705 / NCIMB 13946 / BJ001) (Methylobacterium populi).